The following is a 116-amino-acid chain: Large ribosomal subunit protein uL22 (116 aa).

It belongs to the universal ribosomal protein uL22 family. Part of the 50S ribosomal subunit.

Its function is as follows. This protein binds specifically to 23S rRNA; its binding is stimulated by other ribosomal proteins, e.g. L4, L17, and L20. It is important during the early stages of 50S assembly. It makes multiple contacts with different domains of the 23S rRNA in the assembled 50S subunit and ribosome. The globular domain of the protein is located near the polypeptide exit tunnel on the outside of the subunit, while an extended beta-hairpin is found that lines the wall of the exit tunnel in the center of the 70S ribosome. The protein is Large ribosomal subunit protein uL22 of Gloeobacter violaceus (strain ATCC 29082 / PCC 7421).